We begin with the raw amino-acid sequence, 473 residues long: 3-oxoacyl-[acyl-carrier-protein] synthase I, chloroplastic (473 aa).

Residues 1 to 10 (MQALQSSSLR) show a composition bias toward polar residues. The disordered stretch occupies residues 1 to 26 (MQALQSSSLRASPPNPLRLPSNRQSH). A chloroplast-targeting transit peptide spans 1–46 (MQALQSSSLRASPPNPLRLPSNRQSHQLITNARPLRRQQRSFISAS). Residues 60–470 (KKRVVITGMG…GHNSVVAFSA (411 aa)) enclose the Ketosynthase family 3 (KS3) domain. Catalysis depends on for beta-ketoacyl synthase activity residues C224, H364, and H400.

This sequence belongs to the thiolase-like superfamily. Beta-ketoacyl-ACP synthases family. In terms of assembly, homodimer.

It is found in the plastid. It localises to the chloroplast stroma. It carries out the reaction a fatty acyl-[ACP] + malonyl-[ACP] + H(+) = a 3-oxoacyl-[ACP] + holo-[ACP] + CO2. Functionally, catalyzes the condensation reaction of fatty acid synthesis by the addition to an acyl acceptor of two carbons from malonyl-ACP. Specific for elongation from C-10 to unsaturated C-16 and C-18 fatty acids. This chain is 3-oxoacyl-[acyl-carrier-protein] synthase I, chloroplastic (KAS1), found in Arabidopsis thaliana (Mouse-ear cress).